We begin with the raw amino-acid sequence, 819 residues long: Putative U-box domain-containing protein 53 (819 aa).

2 disordered regions span residues 208-309 (TSDT…NPQF) and 398-433 (KETE…KEKL). Over residues 223-237 (ERTSSSCSSGSGANS) the composition is skewed to low complexity. The span at 238 to 260 (DVMSNALKSNPHTLSNKRMQNLP) shows a compositional bias: polar residues. Over residues 278-296 (DETKKRSSDAAEEASKRSS) the composition is skewed to basic and acidic residues. Over residues 297 to 307 (PETSRSVSWNP) the composition is skewed to polar residues. The stretch at 395-437 (IAKKETEKFEQKRREEREAAQRREAEMKATHEAKEKEKLEESS) forms a coiled coil. A Protein kinase domain is found at 460 to 728 (FSEDLKIGMG…DLEDQILPVL (269 aa)). ATP is bound by residues 466–474 (IGMGAYGDV) and Lys-487. Asp-582 acts as the Proton acceptor in catalysis. The 72-residue stretch at 748 to 819 (QPPSHFFCPL…AIVEWRNRNQ (72 aa)) folds into the U-box domain.

It belongs to the protein kinase superfamily. Ser/Thr protein kinase family.

It carries out the reaction L-seryl-[protein] + ATP = O-phospho-L-seryl-[protein] + ADP + H(+). The catalysed reaction is L-threonyl-[protein] + ATP = O-phospho-L-threonyl-[protein] + ADP + H(+). It catalyses the reaction S-ubiquitinyl-[E2 ubiquitin-conjugating enzyme]-L-cysteine + [acceptor protein]-L-lysine = [E2 ubiquitin-conjugating enzyme]-L-cysteine + N(6)-ubiquitinyl-[acceptor protein]-L-lysine.. The protein operates within protein modification; protein ubiquitination. Its function is as follows. Functions as an E3 ubiquitin ligase. The protein is Putative U-box domain-containing protein 53 (PUB53) of Arabidopsis thaliana (Mouse-ear cress).